Here is a 588-residue protein sequence, read N- to C-terminus: Zeta-carotene desaturase, chloroplastic/chromoplastic (588 aa).

A chloroplast and chromoplast-targeting transit peptide spans 1 to 49; it reads MATCSAYLCCPATSASLKKRVFPDGSAGFLFFGGRRLSNRLVTPKSVIR.

Belongs to the zeta carotene desaturase family. In terms of assembly, monomer and dimer. It depends on decylplastoquinone as a cofactor. Requires 6-decylubiquinone as cofactor.

The protein resides in the plastid. It is found in the chloroplast. The protein localises to the chromoplast. It catalyses the reaction 9,9'-di-cis-zeta-carotene + 2 a quinone = 7,7',9,9'-tetra-cis-lycopene + 2 a quinol. It functions in the pathway carotenoid biosynthesis; lycopene biosynthesis. Its function is as follows. Catalyzes the conversion of zeta-carotene to lycopene via the intermediary of neurosporene. It carries out two consecutive desaturations (introduction of double bonds) at positions C-7 and C-7'. Shows stereoselectivity toward trans C15-C15'zeta-carotene double bond. The zeta-carotene produced by the phytoene desaturase PDS has a C15-C15' double bond in the cis configuration and it requires isomerization before being recognized as substrate by ZDS. No activity with all-trans-zeta-carotene. The main product is 7,9,7',9'-tetra-cis-lycopene (pro-lycopene). The protein is Zeta-carotene desaturase, chloroplastic/chromoplastic (ZDS) of Capsicum annuum (Capsicum pepper).